We begin with the raw amino-acid sequence, 179 residues long: Inner membrane-spanning protein YciB (179 aa).

5 consecutive transmembrane segments (helical) span residues Ile-22 to Val-42, Met-50 to Asn-70, Trp-76 to Met-96, Leu-121 to Leu-141, and Phe-149 to Ile-169.

The protein belongs to the YciB family.

The protein localises to the cell inner membrane. Plays a role in cell envelope biogenesis, maintenance of cell envelope integrity and membrane homeostasis. This Shigella dysenteriae serotype 1 (strain Sd197) protein is Inner membrane-spanning protein YciB.